The following is a 307-amino-acid chain: Protein PROCA1 (307 aa).

Disordered regions lie at residues 134–155 (NHLS…EVPD) and 183–307 (RKEK…PNLS). The span at 200–214 (LKKKAKGKLTKKKTP) shows a compositional bias: basic residues. Residues 216–228 (KSESSPADLSQSV) are compositionally biased toward polar residues. The residue at position 220 (serine 220) is a Phosphoserine. Low complexity predominate over residues 235–248 (PESSPESPGGLESE). Phosphoserine occurs at positions 250, 259, 260, 298, and 307. Basic and acidic residues predominate over residues 250 to 260 (SCERGKERPSS).

It belongs to the PROCA1 family.

In Mus musculus (Mouse), this protein is Protein PROCA1 (Proca1).